An 835-amino-acid polypeptide reads, in one-letter code: Leucine--tRNA ligase (835 aa).

The 'HIGH' region motif lies at 36 to 46 (PYPSGKIHVGH). Positions 602–606 (KMSKS) match the 'KMSKS' region motif. Lys605 is an ATP binding site.

It belongs to the class-I aminoacyl-tRNA synthetase family.

Its subcellular location is the cytoplasm. The enzyme catalyses tRNA(Leu) + L-leucine + ATP = L-leucyl-tRNA(Leu) + AMP + diphosphate. The protein is Leucine--tRNA ligase of Rickettsia africae (strain ESF-5).